The primary structure comprises 122 residues: Large ribosomal subunit protein uL14 (122 aa).

Belongs to the universal ribosomal protein uL14 family. As to quaternary structure, part of the 50S ribosomal subunit. Forms a cluster with proteins L3 and L19. In the 70S ribosome, L14 and L19 interact and together make contacts with the 16S rRNA in bridges B5 and B8.

In terms of biological role, binds to 23S rRNA. Forms part of two intersubunit bridges in the 70S ribosome. This is Large ribosomal subunit protein uL14 from Nocardia farcinica (strain IFM 10152).